The following is a 296-amino-acid chain: Phosphoribosylaminoimidazole-succinocarboxamide synthase (296 aa).

It belongs to the SAICAR synthetase family.

The enzyme catalyses 5-amino-1-(5-phospho-D-ribosyl)imidazole-4-carboxylate + L-aspartate + ATP = (2S)-2-[5-amino-1-(5-phospho-beta-D-ribosyl)imidazole-4-carboxamido]succinate + ADP + phosphate + 2 H(+). It functions in the pathway purine metabolism; IMP biosynthesis via de novo pathway; 5-amino-1-(5-phospho-D-ribosyl)imidazole-4-carboxamide from 5-amino-1-(5-phospho-D-ribosyl)imidazole-4-carboxylate: step 1/2. The chain is Phosphoribosylaminoimidazole-succinocarboxamide synthase from Geobacter metallireducens (strain ATCC 53774 / DSM 7210 / GS-15).